The primary structure comprises 259 residues: Deoxyribose-phosphate aldolase (259 aa).

The active-site Proton donor/acceptor is Asp-102. Lys-167 functions as the Schiff-base intermediate with acetaldehyde in the catalytic mechanism. Catalysis depends on Lys-201, which acts as the Proton donor/acceptor.

This sequence belongs to the DeoC/FbaB aldolase family. DeoC type 2 subfamily.

The protein resides in the cytoplasm. The catalysed reaction is 2-deoxy-D-ribose 5-phosphate = D-glyceraldehyde 3-phosphate + acetaldehyde. The protein operates within carbohydrate degradation; 2-deoxy-D-ribose 1-phosphate degradation; D-glyceraldehyde 3-phosphate and acetaldehyde from 2-deoxy-alpha-D-ribose 1-phosphate: step 2/2. Functionally, catalyzes a reversible aldol reaction between acetaldehyde and D-glyceraldehyde 3-phosphate to generate 2-deoxy-D-ribose 5-phosphate. The protein is Deoxyribose-phosphate aldolase of Serratia proteamaculans (strain 568).